A 293-amino-acid chain; its full sequence is 4-hydroxy-tetrahydrodipicolinate synthase (293 aa).

Position 47 (Thr47) interacts with pyruvate. Tyr135 serves as the catalytic Proton donor/acceptor. The Schiff-base intermediate with substrate role is filled by Lys163. Pyruvate is bound at residue Val205.

Belongs to the DapA family. As to quaternary structure, homotetramer; dimer of dimers.

It localises to the cytoplasm. The catalysed reaction is L-aspartate 4-semialdehyde + pyruvate = (2S,4S)-4-hydroxy-2,3,4,5-tetrahydrodipicolinate + H2O + H(+). Its pathway is amino-acid biosynthesis; L-lysine biosynthesis via DAP pathway; (S)-tetrahydrodipicolinate from L-aspartate: step 3/4. Catalyzes the condensation of (S)-aspartate-beta-semialdehyde [(S)-ASA] and pyruvate to 4-hydroxy-tetrahydrodipicolinate (HTPA). The polypeptide is 4-hydroxy-tetrahydrodipicolinate synthase (Methylibium petroleiphilum (strain ATCC BAA-1232 / LMG 22953 / PM1)).